A 151-amino-acid chain; its full sequence is UPF0178 protein Desal_2673 (151 aa).

Belongs to the UPF0178 family.

The chain is UPF0178 protein Desal_2673 from Maridesulfovibrio salexigens (strain ATCC 14822 / DSM 2638 / NCIMB 8403 / VKM B-1763) (Desulfovibrio salexigens).